We begin with the raw amino-acid sequence, 384 residues long: L-type lectin-like domain-containing protein C4F6.05c (384 aa).

The N-terminal stretch at 1-19 is a signal peptide; that stretch reads MKFCSLFHVLSFCCTLAYA. The 205-residue stretch at 20–224 folds into the L-type lectin-like domain; that stretch reads VPKSQFLQLH…DLVALSNLNI (205 aa). Over 20-353 the chain is Extracellular; sequence VPKSQFLQLH…AMGNAYSPYN (334 aa). The disordered stretch occupies residues 227–251; it reads PDTSNNENLNPTSNTKQSVGDNTSP. A helical transmembrane segment spans residues 354–374; that stretch reads LTNFMVFLLLGAIVSYGIMLV. At 375–384 the chain is on the cytoplasmic side; that stretch reads RRDRRRHKYL.

Its subcellular location is the membrane. It localises to the endoplasmic reticulum. The protein resides in the golgi apparatus. The protein is L-type lectin-like domain-containing protein C4F6.05c of Schizosaccharomyces pombe (strain 972 / ATCC 24843) (Fission yeast).